The sequence spans 376 residues: N-acetyldiaminopimelate deacetylase (376 aa).

D69 is an active-site residue. Residue E128 is the Proton acceptor of the active site.

Belongs to the peptidase M20A family. N-acetyldiaminopimelate deacetylase subfamily.

The catalysed reaction is N-acetyl-(2S,6S)-2,6-diaminopimelate + H2O = (2S,6S)-2,6-diaminopimelate + acetate. Its pathway is amino-acid biosynthesis; L-lysine biosynthesis via DAP pathway; LL-2,6-diaminopimelate from (S)-tetrahydrodipicolinate (acetylase route): step 3/3. Functionally, catalyzes the conversion of N-acetyl-diaminopimelate to diaminopimelate and acetate. This is N-acetyldiaminopimelate deacetylase from Bacillus cereus (strain 03BB102).